Here is a 324-residue protein sequence, read N- to C-terminus: tRNA-modifying protein YgfZ (324 aa).

Trp-186 contacts folate.

This sequence belongs to the tRNA-modifying YgfZ family.

Its subcellular location is the cytoplasm. Its function is as follows. Folate-binding protein involved in regulating the level of ATP-DnaA and in the modification of some tRNAs. It is probably a key factor in regulatory networks that act via tRNA modification, such as initiation of chromosomal replication. In Colwellia psychrerythraea (strain 34H / ATCC BAA-681) (Vibrio psychroerythus), this protein is tRNA-modifying protein YgfZ.